The sequence spans 429 residues: 3-phosphoshikimate 1-carboxyvinyltransferase (429 aa).

3-phosphoshikimate-binding residues include Lys-23, Ser-24, and Arg-28. Lys-23 is a phosphoenolpyruvate binding site. Gly-95 and Arg-123 together coordinate phosphoenolpyruvate. 3-phosphoshikimate contacts are provided by Ser-168, Gln-170, Asp-316, and Lys-343. Gln-170 contacts phosphoenolpyruvate. The active-site Proton acceptor is Asp-316. 2 residues coordinate phosphoenolpyruvate: Arg-347 and Arg-389.

Belongs to the EPSP synthase family. Monomer.

It localises to the cytoplasm. The enzyme catalyses 3-phosphoshikimate + phosphoenolpyruvate = 5-O-(1-carboxyvinyl)-3-phosphoshikimate + phosphate. It functions in the pathway metabolic intermediate biosynthesis; chorismate biosynthesis; chorismate from D-erythrose 4-phosphate and phosphoenolpyruvate: step 6/7. Its function is as follows. Catalyzes the transfer of the enolpyruvyl moiety of phosphoenolpyruvate (PEP) to the 5-hydroxyl of shikimate-3-phosphate (S3P) to produce enolpyruvyl shikimate-3-phosphate and inorganic phosphate. The polypeptide is 3-phosphoshikimate 1-carboxyvinyltransferase (Bacillus cereus (strain ZK / E33L)).